A 381-amino-acid polypeptide reads, in one-letter code: Cytochrome b (381 aa).

Transmembrane regions (helical) follow at residues 34 to 54 (FGSHLGLCLIIQILTGLFLAM), 78 to 99 (WLIRNIHANGASLFFICVYLHI), 114 to 134 (WNIGVILLFLLMATAFVGYVL), and 179 to 199 (FFAFHFLLPFLILALTVIHLL). The heme b site is built by histidine 84 and histidine 98. Histidine 183 and histidine 197 together coordinate heme b. Histidine 202 contacts a ubiquinone. 4 helical membrane-spanning segments follow: residues 227–247 (YKDLLGFFVMIFFLAALALFM), 289–309 (LGGVLALLFSIFILMLVPLLH), 321–341 (MTQILFWFLVANSIILTWIGG), and 348–368 (FIMVGQIASISYFSLFLIIMP).

The protein belongs to the cytochrome b family. In terms of assembly, the cytochrome bc1 complex contains 3 respiratory subunits (MT-CYB, CYC1 and UQCRFS1), 2 core proteins (UQCRC1 and UQCRC2) and probably 6 low-molecular weight proteins. Heme b serves as cofactor.

It localises to the mitochondrion inner membrane. Its function is as follows. Component of the ubiquinol-cytochrome c reductase complex (complex III or cytochrome b-c1 complex) that is part of the mitochondrial respiratory chain. The b-c1 complex mediates electron transfer from ubiquinol to cytochrome c. Contributes to the generation of a proton gradient across the mitochondrial membrane that is then used for ATP synthesis. The chain is Cytochrome b (mt-cyb) from Carcharhinus porosus (Smalltail shark).